The sequence spans 160 residues: 6,7-dimethyl-8-ribityllumazine synthase (160 aa).

5-amino-6-(D-ribitylamino)uracil contacts are provided by residues tryptophan 28, 59–61, and 82–84; these read SFE and VII. (2S)-2-hydroxy-3-oxobutyl phosphate is bound at residue 87–88; it reads GT. Histidine 90 functions as the Proton donor in the catalytic mechanism. Position 115 (phenylalanine 115) interacts with 5-amino-6-(D-ribitylamino)uracil. Arginine 129 contacts (2S)-2-hydroxy-3-oxobutyl phosphate.

It belongs to the DMRL synthase family.

The enzyme catalyses (2S)-2-hydroxy-3-oxobutyl phosphate + 5-amino-6-(D-ribitylamino)uracil = 6,7-dimethyl-8-(1-D-ribityl)lumazine + phosphate + 2 H2O + H(+). It participates in cofactor biosynthesis; riboflavin biosynthesis; riboflavin from 2-hydroxy-3-oxobutyl phosphate and 5-amino-6-(D-ribitylamino)uracil: step 1/2. Functionally, catalyzes the formation of 6,7-dimethyl-8-ribityllumazine by condensation of 5-amino-6-(D-ribitylamino)uracil with 3,4-dihydroxy-2-butanone 4-phosphate. This is the penultimate step in the biosynthesis of riboflavin. This chain is 6,7-dimethyl-8-ribityllumazine synthase, found in Clavibacter sepedonicus (Clavibacter michiganensis subsp. sepedonicus).